We begin with the raw amino-acid sequence, 101 residues long: MLTLAHYLVLGAILFAIAIVGIFLNRRNVIIILMSIELMLLAVNTNFVAFSHYLGDVHGQIFVFFVLTVAAAEAAIGLAILVTLFRKLDTINVEDLDQLKG.

The next 3 helical transmembrane spans lie at 4 to 24 (LAHYLVLGAILFAIAIVGIFL), 30 to 50 (IIILMSIELMLLAVNTNFVAF), and 61 to 81 (IFVFFVLTVAAAEAAIGLAIL).

The protein belongs to the complex I subunit 4L family. As to quaternary structure, NDH-1 is composed of 14 different subunits. Subunits NuoA, H, J, K, L, M, N constitute the membrane sector of the complex.

The protein resides in the cell inner membrane. It carries out the reaction a quinone + NADH + 5 H(+)(in) = a quinol + NAD(+) + 4 H(+)(out). In terms of biological role, NDH-1 shuttles electrons from NADH, via FMN and iron-sulfur (Fe-S) centers, to quinones in the respiratory chain. The immediate electron acceptor for the enzyme in this species is believed to be ubiquinone. Couples the redox reaction to proton translocation (for every two electrons transferred, four hydrogen ions are translocated across the cytoplasmic membrane), and thus conserves the redox energy in a proton gradient. This is NADH-quinone oxidoreductase subunit K from Burkholderia cenocepacia (strain HI2424).